The following is a 295-amino-acid chain: Probable peptidyl-prolyl cis-trans isomerase B (295 aa).

Disordered stretches follow at residues 105-128 (SADKAAKPVKPPRAGKVPTDPATV) and 274-295 (IASGGDDGPPATEVTIESLRLD). The PPIase cyclophilin-type domain occupies 126–294 (ATVSASMATN…TEVTIESLRL (169 aa)).

The protein belongs to the cyclophilin-type PPIase family.

The enzyme catalyses [protein]-peptidylproline (omega=180) = [protein]-peptidylproline (omega=0). PPIases accelerate the folding of proteins. It catalyzes the cis-trans isomerization of proline imidic peptide bonds in oligopeptides. In Mycobacterium leprae (strain TN), this protein is Probable peptidyl-prolyl cis-trans isomerase B (ppiB).